The sequence spans 90 residues: Small ribosomal subunit protein bS18A (90 aa).

This sequence belongs to the bacterial ribosomal protein bS18 family. In terms of assembly, part of the 30S ribosomal subunit. Forms a tight heterodimer with protein bS6.

Functionally, binds as a heterodimer with protein bS6 to the central domain of the 16S rRNA, where it helps stabilize the platform of the 30S subunit. This chain is Small ribosomal subunit protein bS18A, found in Roseiflexus castenholzii (strain DSM 13941 / HLO8).